A 282-amino-acid chain; its full sequence is Transcription factor HES-1 (282 aa).

A disordered region spans residues 1-44 (MPADIMEKNSSSPVAATPASVNTTPDKPKTASEHRKSSKPIMEK). Over residues 10–21 (SSSPVAATPASV) the composition is skewed to low complexity. A compositionally biased stretch (basic and acidic residues) spans 26-35 (DKPKTASEHR). A bHLH domain is found at 34–91 (HRKSSKPIMEKRRRARINESLSQLKTLILDALKKDSSRHSKLEKADILEMTVKHLRNL). Residues 110–143 (YRAGFSECMNEVTRFLSTCEGVNTEVRTRLLGHL) enclose the Orange domain. 2 disordered regions span residues 158 to 204 (QAHP…GSAP) and 256 to 282 (TSVG…PWRN). Pro residues-rich tracts occupy residues 164–174 (QAPPPPPPSGP) and 182–202 (FAPP…PPGS). Over residues 264 to 275 (SPSSGSSLTSDS) the composition is skewed to low complexity. The short motif at 277–280 (WRPW) is the WRPW motif element.

Interacts with SIRT1. Transcription repression requires formation of a complex with a corepressor protein of the Groucho/TLE family. Interacts (via WPRW motif) with TLE1, and more weakly with TLE2. Interacts with HES6. Interacts with an FA complex, composed of FANCA, FANCF, FANCG and FANCL, but not of FANCC, nor FANCE. Expressed at high levels in undifferentiated neural precursor cells, but the level of expression decreases as neural differentiation proceeds.

The protein localises to the nucleus. Its function is as follows. Transcriptional repressor of genes that require a bHLH protein for their transcription. May act as a negative regulator of myogenesis by inhibiting the functions of MYOD1 and ASH1. Binds DNA on N-box motifs: 5'-CACNAG-3' with high affinity and on E-box motifs: 5'-CANNTG-3' with low affinity. May play a role in a functional FA core complex response to DNA cross-link damage, being required for the stability and nuclear localization of FA core complex proteins, as well as for FANCD2 monoubiquitination in response to DNA damage. This Mus musculus (Mouse) protein is Transcription factor HES-1 (Hes1).